Consider the following 545-residue polypeptide: Hydroxylamine reductase (545 aa).

4 residues coordinate [4Fe-4S] cluster: cysteine 7, cysteine 10, cysteine 19, and cysteine 25. Hybrid [4Fe-2O-2S] cluster-binding residues include histidine 241, glutamate 265, cysteine 309, cysteine 400, cysteine 428, cysteine 453, glutamate 488, and lysine 490. Cysteine 400 bears the Cysteine persulfide; in oxidized form mark.

It belongs to the HCP family. Monomer. [4Fe-4S] cluster serves as cofactor. Hybrid [4Fe-2O-2S] cluster is required as a cofactor.

The protein localises to the cytoplasm. The catalysed reaction is A + NH4(+) + H2O = hydroxylamine + AH2 + H(+). In terms of biological role, catalyzes the reduction of hydroxylamine to form NH(3) and H(2)O. In Desulfovibrio desulfuricans (strain ATCC 27774 / DSM 6949 / MB), this protein is Hydroxylamine reductase.